The sequence spans 34 residues: Cycloamanide E proprotein (34 aa).

Residues 1–10 constitute a propeptide that is removed on maturation; the sequence is MSDINAARLP. A cross-link (cyclopeptide (Ser-Pro)) is located at residues 11–17; the sequence is SFFFPVP. The propeptide occupies 18-34; that stretch reads CISDDIEMVLTRGESLC.

This sequence belongs to the MSDIN fungal toxin family. In terms of processing, processed by the macrocyclase-peptidase enzyme POPB to yield a cyclic decapeptide. POPB first removes 10 residues from the N-terminus. Conformational trapping of the remaining peptide forces the enzyme to release this intermediate rather than proceed to macrocyclization. The enzyme rebinds the remaining peptide in a different conformation and catalyzes macrocyclization of the N-terminal 7 residues.

Functionally, cyclic heptapeptide that belongs to the MSDIN-like toxin family responsible for a large number of food poisoning cases and deaths. Cycloaminide E is structurally related to other cycloamanides that are non-toxic to mammals but show immunosuppressive activity. The polypeptide is Cycloamanide E proprotein (Amanita phalloides (Death cap)).